Reading from the N-terminus, the 387-residue chain is Mannitol-1-phosphate 5-dehydrogenase (387 aa).

3 to 14 contacts NAD(+); that stretch reads ALHFGAGNIGRG.

The protein belongs to the mannitol dehydrogenase family.

It catalyses the reaction D-mannitol 1-phosphate + NAD(+) = beta-D-fructose 6-phosphate + NADH + H(+). This Yersinia pseudotuberculosis serotype O:3 (strain YPIII) protein is Mannitol-1-phosphate 5-dehydrogenase.